Consider the following 716-residue polypeptide: MRRNKPKKQNHKEKKKSLPIRLNILFLAAFVIFTWIIVELGIKQIVQGDDYKNQANKQEQSEVSSAVPRGKIYDRNFNAIVTNKALNAITYTRSKSTTQEQRLKIAKKLSDMIKVDTKKVTERDKKDYWILTRPKEAKKLISSKERQQVEDKKISDDDLYQLQLKRITDKQLNELTDKDMQILAIKRQMDSGYALTPQYIKNEDVSAKEMAVVSEHLDELPGVDVTSDWEREYPYKNLLRSVLGSVSSSNEGLPSNLLDHYLSLGYSRNDRVGKSYLEYQYESLLQGQKAKVENITDSKGNVTGTKTVSEGKAGKDLVLTIDIDLQKSVEKIIEKKLKAAKARPSTELLDRAFVVMMDPRNGEVLTMAGKQIKRENGAYKFDDYALGAMTSSYAMGSAVKGATVLTGLQTGAINLNTVFKDEPLYIGQDKRGKKSWQNLGPVGIQTALEKSSNVFMFKTAIAVGKGEYKPHQALPLDTSAFDTFRNYFSQFGLGVKTGIDLPNEMTGYKGTSRLSGFLLDFAIGQYDTYTPLELAQYVSTIANGGYRMKPQLVKEVRDSNAKKGIGAVVDSVQPEVLNKVDMKSSYIEEVQAGFRRVATKGTAAGQLASASYKPAAKTGTAQSFYDGPDKSKTGTDTYNTTLVAYAPADNPEIAISVVVPWTYIDYNQRYSITNEIGREVMDKYFELKSKQDKEGTQQKNKDKIEENAENTTSSDN.

Residues 22-42 (LNILFLAAFVIFTWIIVELGI) traverse the membrane as a helical segment. Serine 397 functions as the Acyl-ester intermediate in the catalytic mechanism. The segment covering 689–706 (SKQDKEGTQQKNKDKIEE) has biased composition (basic and acidic residues). The segment at 689–716 (SKQDKEGTQQKNKDKIEENAENTTSSDN) is disordered.

The protein belongs to the transpeptidase family.

It is found in the cell membrane. Its subcellular location is the forespore inner membrane. It carries out the reaction Preferential cleavage: (Ac)2-L-Lys-D-Ala-|-D-Ala. Also transpeptidation of peptidyl-alanyl moieties that are N-acyl substituents of D-alanine.. It functions in the pathway cell wall biogenesis; peptidoglycan biosynthesis. Involved in the synthesis of peptidoglycan associated with cell wall elongation, especially following spore germination. Has a partially redundant function with PBP 1 (ponA) or PBP 4 (pbpD) during spore outgrowth. Plays a redundant role with PbpH in determining the rod shape of the cell during vegetative growth and spore outgrowth. The polypeptide is Penicillin-binding protein 2A (Bacillus subtilis (strain 168)).